A 139-amino-acid chain; its full sequence is Putative nickel-responsive regulator (139 aa).

Ni(2+) is bound by residues His-79, His-90, His-92, and Cys-98.

Belongs to the transcriptional regulatory CopG/NikR family. Requires Ni(2+) as cofactor.

Its function is as follows. Transcriptional regulator. In Solidesulfovibrio magneticus (strain ATCC 700980 / DSM 13731 / RS-1) (Desulfovibrio magneticus), this protein is Putative nickel-responsive regulator.